Here is a 209-residue protein sequence, read N- to C-terminus: Casparian strip membrane protein 1 (209 aa).

Topologically, residues 1–46 are cytoplasmic; sequence MSSGANATTIDVPETRAEAKGKAPLIAAPIVATTKATPHPNAGWKK. Residues 47-67 form a helical membrane-spanning segment; the sequence is GLAIFDFLLRLAAIAATLAAA. At 68–95 the chain is on the extracellular side; it reads TTMGTTDETLPFFTQFFQFQASFDDLPA. The chain crosses the membrane as a helical span at residues 96–116; the sequence is FMFFVVATAIASGYLALSLPF. Residues 117–137 lie on the Cytoplasmic side of the membrane; sequence SLVSIFRPHAQGIRLLLIISD. Residues 138 to 158 form a helical membrane-spanning segment; the sequence is TVMLALTTAGAASATAIVYLA. Residues 159–183 are Extracellular-facing; it reads HNGDSSANWIAICQQFTDFCQSVSG. The chain crosses the membrane as a helical span at residues 184-204; it reads AVVASFIAVVIFMLLVMMSAL. Residues 205–209 are Cytoplasmic-facing; it reads ALRKH.

This sequence belongs to the Casparian strip membrane proteins (CASP) family. Homodimer and heterodimers.

It is found in the cell membrane. In terms of biological role, regulates membrane-cell wall junctions and localized cell wall deposition. Required for establishment of the Casparian strip membrane domain (CSD) and the subsequent formation of Casparian strips, a cell wall modification of the root endodermis that determines an apoplastic barrier between the intraorganismal apoplasm and the extraorganismal apoplasm and prevents lateral diffusion. The polypeptide is Casparian strip membrane protein 1 (Vitis vinifera (Grape)).